Here is a 406-residue protein sequence, read N- to C-terminus: Subtilisin-like protease CPC735_023170 (406 aa).

An N-terminal signal peptide occupies residues 1–20; it reads MRLFQSTCVLVGTVLPLFTA. Residues 21-118 constitute a propeptide that is removed on maturation; that stretch reads FPISSPREIE…VEPDSMAYVT (98 aa). One can recognise an Inhibitor I9 domain in the interval 35–115; sequence KYIITFKKGI…VESVEPDSMA (81 aa). Asn125 is a glycosylation site (N-linked (GlcNAc...) asparagine). One can recognise a Peptidase S8 domain in the interval 127–406; sequence TYGPRRISHR…NKLAYNGSGK (280 aa). Catalysis depends on charge relay system residues Asp161 and His192. Asn239 carries N-linked (GlcNAc...) asparagine glycosylation. Residues 283–309 are disordered; it reads NDGRDAGRNSPGSAPESITVGSINSRR. A glycan (N-linked (GlcNAc...) asparagine) is linked at Asn346. Residue Ser351 is the Charge relay system of the active site. N-linked (GlcNAc...) asparagine glycosylation is present at Asn402.

It belongs to the peptidase S8 family.

Its subcellular location is the secreted. Functionally, secreted subtilisin-like serine protease with keratinolytic activity that contributes to pathogenicity. The polypeptide is Subtilisin-like protease CPC735_023170 (Coccidioides posadasii (strain C735) (Valley fever fungus)).